The sequence spans 1140 residues: Centrosomal protein of 135 kDa (1140 aa).

Residues 11–64 (NIRKRLDQLGYRQTLTVECLPLVEKLFSDLVHTTESLRQSKLSAVKAEKESANF) are homodimerization. 2 coiled-coil regions span residues 75 to 151 (NARL…KNLH) and 199 to 416 (LQVA…FAVT). 2 positions are modified to phosphoserine: serine 383 and serine 439. 3 coiled-coil regions span residues 447–644 (LKGI…LENK), 668–1036 (SLRI…LESL), and 1079–1113 (NTMLRAKVAQLQTDYDALKRQISTERYERERAIQE). Serine 688 is modified (phosphoserine). Residues 1114–1140 (MRRHGLATPPLSSTLRSPSHSPEHRNV) form a disordered region. Phosphothreonine is present on threonine 1121. Low complexity predominate over residues 1121–1133 (TPPLSSTLRSPSH). Serine 1130 is modified (phosphoserine).

This sequence belongs to the CEP135/TSGA10 family. In terms of assembly, homodimer. Interacts with DCTN2. Interacts with CEP250.

It is found in the cytoplasm. It localises to the cytoskeleton. The protein resides in the microtubule organizing center. Its subcellular location is the centrosome. The protein localises to the centriole. Centrosomal microtubule-binding protein involved in centriole biogenesis. Acts as a scaffolding protein during early centriole biogenesis. Required for the targeting of centriole satellite proteins to centrosomes such as of PCM1, SSX2IP and CEP290 and recruitment of WRAP73 to centrioles. Also required for centriole-centriole cohesion during interphase by acting as a platform protein for CEP250 at the centriole. Required for the recruitment of CEP295 to the proximal end of new-born centrioles at the centriolar microtubule wall during early S phase in a PLK4-dependent manner. The polypeptide is Centrosomal protein of 135 kDa (Homo sapiens (Human)).